The sequence spans 84 residues: Cell division topological specificity factor (84 aa).

This sequence belongs to the MinE family.

Prevents the cell division inhibition by proteins MinC and MinD at internal division sites while permitting inhibition at polar sites. This ensures cell division at the proper site by restricting the formation of a division septum at the midpoint of the long axis of the cell. The polypeptide is Cell division topological specificity factor (Burkholderia multivorans (strain ATCC 17616 / 249)).